The sequence spans 972 residues: uncharacterized protein (972 aa).

The first 21 residues, 1–21 (MTNMILLSAVFLSLAILETHC), serve as a signal peptide directing secretion. At 22-932 (ANHISTGIST…KELGEKLYHV (911 aa)) the chain is on the extracellular side. The segment at 892–912 (EPTVTTTTESPPPPTTTTRQI) is disordered. A helical membrane pass occupies residues 933–953 (LFFMGVLTVSVAGGVIILSFI). Topologically, residues 954–972 (GCLIMRKMEDAPQKTKYSV) are cytoplasmic.

It localises to the host membrane. This is an uncharacterized protein from Magallana gigas (Pacific oyster).